A 194-amino-acid polypeptide reads, in one-letter code: DPY30 domain-containing protein 2 (194 aa).

Residues 126-172 are disordered; it reads EAFEKEPLKQESLPGTSDMIPGMPQQSPSSEPSVSSQVDLNTGTPQE. Low complexity predominate over residues 149 to 163; the sequence is PQQSPSSEPSVSSQV.

This sequence belongs to the dpy-30 family.

The protein is DPY30 domain-containing protein 2 (DYDC2) of Bos taurus (Bovine).